A 345-amino-acid polypeptide reads, in one-letter code: Protein lifeguard 1 (345 aa).

Positions 1 to 115 (MSHEKSFLVS…GNYQEEGPPS (115 aa)) are disordered. 2 stretches are compositionally biased toward pro residues: residues 24–46 (APMPPYVQAPYPGAPYPQAPFQP) and 79–98 (GPYPQSPFPPNPYGQPPPFQ). The next 7 helical transmembrane spans lie at 139–159 (VFLVLTLQLSVTLSTVAIFTF), 171–191 (VWTYYVSYAIFFISLIVLSCC), 202–222 (LVALSILTVSLSYMVGMIASF), 227–247 (AVIMAVGITTAVCFTVVIFSM), 257–277 (MGVLLVSVVVLFIFAILCIFI), 281–301 (ILEIVYASLGALLFTCFLAVD), and 320–340 (FAALNLYTDIINIFLYILTII).

This sequence belongs to the BI1 family. LFG subfamily.

Its subcellular location is the membrane. Potential apoptotic regulator. This is Protein lifeguard 1 (Grina) from Mus musculus (Mouse).